Consider the following 192-residue polypeptide: ADP-ribosylation factor-like protein 14 (192 aa).

G2 carries N-myristoyl glycine lipidation. GTP contacts are provided by residues G20–S27, D64–Q68, and N123–D126.

Belongs to the small GTPase superfamily. Arf family. Interacts with ARL14EP. As to expression, expressed in immature dendritic cells.

Its subcellular location is the cytoplasmic vesicle. GTPase that recruits MYO1E to MHC class II-containing vesicles via the effector protein ARL14EP and hence controls the movement of these vesicles along the actin cytoskeleton in dendritic cells. This is ADP-ribosylation factor-like protein 14 (ARL14) from Homo sapiens (Human).